Here is a 239-residue protein sequence, read N- to C-terminus: Cysteine-rich venom protein (239 aa).

The signal sequence occupies residues 1-19 (MIAFLVLPILAAVLQQSSG). Positions 39-166 (DLHNSLRRSV…EYKYFYVCQY (128 aa)) constitute an SCP domain. 8 cysteine pairs are disulfide-bonded: C75–C153, C92–C167, C148–C164, C186–C193, C189–C198, C202–C234, C211–C228, and C219–C232. The 33-residue stretch at 202 to 234 (CTHEDKFTNCKDLVKQGCNNNYLKTNCPASCSC) folds into the ShKT domain.

The protein belongs to the CRISP family. Expressed by the venom gland.

It is found in the secreted. Its function is as follows. Blocks contraction of smooth muscle elicited by high potassium-induced depolarization, but does not block caffeine-stimulated contraction. May target voltage-gated calcium channels in smooth muscle. The sequence is that of Cysteine-rich venom protein from Vipera berus (Common European adder).